The primary structure comprises 265 residues: Undecaprenyl-diphosphatase (265 aa).

Transmembrane regions (helical) follow at residues 38–58 (SDMF…IIYW), 80–100 (LIVA…LGFE), 107–127 (PIAW…WAAA), 135–155 (ITWL…VFPG), 175–195 (AAAT…ASGY), 213–233 (ALAI…KWLL), and 244–264 (FAIY…SGLI).

The protein belongs to the UppP family.

It is found in the cell inner membrane. The catalysed reaction is di-trans,octa-cis-undecaprenyl diphosphate + H2O = di-trans,octa-cis-undecaprenyl phosphate + phosphate + H(+). Its function is as follows. Catalyzes the dephosphorylation of undecaprenyl diphosphate (UPP). Confers resistance to bacitracin. The sequence is that of Undecaprenyl-diphosphatase from Rhizobium etli (strain CIAT 652).